The sequence spans 610 residues: ABC transporter ATP-binding protein ARB1 (610 aa).

Residues methionine 1 to serine 43 form a disordered region. Residues serine 43 and serine 65 each carry the phosphoserine modification. ABC transporter domains lie at isoleucine 82–methionine 323 and leucine 393–leucine 610. Residue glycine 114–serine 121 coordinates ATP. At serine 196 the chain carries Phosphoserine. Glycine 428–serine 435 lines the ATP pocket. Phosphothreonine is present on threonine 446.

The protein belongs to the ABC transporter superfamily. ABCF family. EF3 subfamily. As to quaternary structure, interacts with LSG1.

The protein resides in the cytoplasm. It localises to the nucleus. It carries out the reaction ATP + H2O = ADP + phosphate + H(+). In terms of biological role, ATPase that stimulates 40S and 60S ribosome biogenesis. Also involved in ribosome-associated quality control (RQC) pathway, a pathway that mediates ubiquitination and extraction of incompletely synthesized nascent chains for proteasomal degradation: localizes to the ribosomal E-site and stimulates VMS1-dependent tRNA cleavage. The polypeptide is ABC transporter ATP-binding protein ARB1 (ARB1) (Saccharomyces cerevisiae (strain ATCC 204508 / S288c) (Baker's yeast)).